We begin with the raw amino-acid sequence, 303 residues long: NAD kinase (303 aa).

The Proton acceptor role is filled by aspartate 71. NAD(+) contacts are provided by residues 71 to 72, 145 to 146, arginine 156, arginine 173, aspartate 175, 186 to 191, and glutamine 245; these read DG, ND, and TGYSLS.

This sequence belongs to the NAD kinase family. It depends on a divalent metal cation as a cofactor.

It is found in the cytoplasm. It carries out the reaction NAD(+) + ATP = ADP + NADP(+) + H(+). Functionally, involved in the regulation of the intracellular balance of NAD and NADP, and is a key enzyme in the biosynthesis of NADP. Catalyzes specifically the phosphorylation on 2'-hydroxyl of the adenosine moiety of NAD to yield NADP. The protein is NAD kinase of Magnetococcus marinus (strain ATCC BAA-1437 / JCM 17883 / MC-1).